Consider the following 199-residue polypeptide: GTP cyclohydrolase 1 (199 aa).

Residues Cys89, His92, and Cys161 each coordinate Zn(2+).

It belongs to the GTP cyclohydrolase I family. As to quaternary structure, toroid-shaped homodecamer, composed of two pentamers of five dimers.

It catalyses the reaction GTP + H2O = 7,8-dihydroneopterin 3'-triphosphate + formate + H(+). It functions in the pathway cofactor biosynthesis; 7,8-dihydroneopterin triphosphate biosynthesis; 7,8-dihydroneopterin triphosphate from GTP: step 1/1. This chain is GTP cyclohydrolase 1, found in Bifidobacterium longum (strain NCC 2705).